A 216-amino-acid chain; its full sequence is 3-keto-L-gulonate-6-phosphate decarboxylase UlaD (216 aa).

Substrate is bound at residue Asp-11. The Mg(2+) site is built by Glu-33 and Asp-62. Position 192 (Arg-192) interacts with substrate.

The protein belongs to the HPS/KGPDC family. KGPDC subfamily. In terms of assembly, homodimer. Requires Mg(2+) as cofactor.

The catalysed reaction is 3-dehydro-L-gulonate 6-phosphate + H(+) = L-xylulose 5-phosphate + CO2. Its pathway is cofactor degradation; L-ascorbate degradation; D-xylulose 5-phosphate from L-ascorbate: step 2/4. Functionally, catalyzes the decarboxylation of 3-keto-L-gulonate-6-P into L-xylulose-5-P. Is involved in the anaerobic L-ascorbate utilization. The polypeptide is 3-keto-L-gulonate-6-phosphate decarboxylase UlaD (Escherichia coli O127:H6 (strain E2348/69 / EPEC)).